Reading from the N-terminus, the 237-residue chain is Intracellular ribonuclease LX (237 aa).

Positions 1 to 24 (MMKSQKKLLIKIIVVQCLLVLCVT) are excised as a propeptide. RNA is bound at residue Gln36. Cys42 and Cys48 are joined by a disulfide. RNA contacts are provided by residues His63, Phe113, 116 to 117 (HE), and 120 to 121 (KH). Residue His63 is the Proton donor of the active site. 3 cysteine pairs are disulfide-bonded: Cys78–Cys124, Cys183–Cys219, and Cys199–Cys210. Glu117 is a catalytic residue. Catalysis depends on His121, which acts as the Proton acceptor.

Belongs to the RNase T2 family.

It is found in the cytoplasm. It catalyses the reaction a ribonucleotidyl-ribonucleotide-RNA + H2O = a 3'-end 3'-phospho-ribonucleotide-RNA + a 5'-end dephospho-ribonucleoside-RNA + H(+). The sequence is that of Intracellular ribonuclease LX (RNALX) from Solanum lycopersicum (Tomato).